The sequence spans 177 residues: Protein-export protein SecB (177 aa).

Belongs to the SecB family. As to quaternary structure, homotetramer, a dimer of dimers. One homotetramer interacts with 1 SecA dimer.

The protein localises to the cytoplasm. Its function is as follows. One of the proteins required for the normal export of preproteins out of the cell cytoplasm. It is a molecular chaperone that binds to a subset of precursor proteins, maintaining them in a translocation-competent state. It also specifically binds to its receptor SecA. The protein is Protein-export protein SecB of Ehrlichia canis (strain Jake).